A 452-amino-acid chain; its full sequence is Na(+)/H(+) antiporter NhaA (452 aa).

11 consecutive transmembrane segments (helical) span residues 27–47 (FLHIEAMSGVVLLLAAATALI), 78–98 (LHFWVNDVLMTIFFLVAGMEI), 114–134 (ILPIVAAIGGVCIPAIIYLSF), 141–161 (IYGWAVPTATDIAFALGILAL), 172–192 (IILLSLAIIDDIMAVLIIAFF), 201–221 (GLAIAAAGIALVFFFQWISFA), 222–242 (SAWLYVLPGAIIWWGLMVTGI), 316–336 (PWVAYGVMPIFAFANAGVSFA), 346–366 (FLIVLGIIIGLCIGKPLGILA), 388–408 (ILLIGFLAGIGFTMSIFVSML), and 421–441 (IGVLCGSGLSALAGLGYGLIY).

The protein belongs to the NhaA Na(+)/H(+) (TC 2.A.33) antiporter family.

It is found in the cell inner membrane. The catalysed reaction is Na(+)(in) + 2 H(+)(out) = Na(+)(out) + 2 H(+)(in). Na(+)/H(+) antiporter that extrudes sodium in exchange for external protons. The chain is Na(+)/H(+) antiporter NhaA from Bartonella bacilliformis (strain ATCC 35685 / KC583 / Herrer 020/F12,63).